The following is a 409-amino-acid chain: Nucleoprotein (409 aa).

Disordered stretches follow at residues 1–32 (MASGKAAGKSDAPTPIIKLGGPKPPKIGSSGN), 47–84 (PQPKFEGSGVPDNNNIKPSQQHGYWRRQARYKPGKSGR), 121–145 (ADTKSRSNQGTRDPDKFDQYPLRFS), and 164–194 (RSGRSTAASSAASSRAPSREGSRGRRSGAED). The tract at residues 29–160 (SSGNASWFQA…GNFRWDFIPL (132 aa)) is RNA-binding. A CoV N NTD domain is found at 31–156 (GNASWFQAIK…GGPDGNFRWD (126 aa)). Positions 57-68 (PDNNNIKPSQQH) are enriched in polar residues. Residues 70–84 (YWRRQARYKPGKSGR) are compositionally biased toward basic residues. Positions 164 to 179 (RSGRSTAASSAASSRA) are enriched in low complexity. A compositionally biased stretch (basic and acidic residues) spans 180-192 (PSREGSRGRRSGA). The residue at position 190 (serine 190) is a Phosphoserine; by host. One can recognise a CoV N CTD domain in the interval 215 to 331 (TKAKADEMAH…QCVDGVGTRP (117 aa)). The tract at residues 226–333 (RYCKRTIPPG…VDGVGTRPKD (108 aa)) is dimerization. An intrachain disulfide couples cysteine 320 to cysteine 323. The segment at 326 to 409 (GVGTRPKDDE…GDSALGENEL (84 aa)) is disordered. A compositionally biased stretch (basic residues) spans 358–367 (QRPKKEKKPK). A compositionally biased stretch (basic and acidic residues) spans 368–384 (KQDDEVDKALTSDEERN). Threonine 378 bears the Phosphothreonine; by host mark. Serine 379 carries the post-translational modification Phosphoserine; by host.

This sequence belongs to the gammacoronavirus nucleocapsid protein family. As to quaternary structure, homooligomer. Both monomeric and oligomeric forms interact with RNA. Interacts with protein M. Interacts with NSP3; this interaction serves to tether the genome to the newly translated replicase-transcriptase complex at a very early stage of infection. Post-translationally, ADP-ribosylated. The ADP-ribosylation is retained in the virion during infection. In terms of processing, phosphorylated on serine and threonine residues.

It is found in the virion. The protein resides in the host endoplasmic reticulum-Golgi intermediate compartment. It localises to the host Golgi apparatus. Its function is as follows. Packages the positive strand viral genome RNA into a helical ribonucleocapsid (RNP) and plays a fundamental role during virion assembly through its interactions with the viral genome and membrane protein M. Plays an important role in enhancing the efficiency of subgenomic viral RNA transcription as well as viral replication. This is Nucleoprotein from Gallus gallus (Chicken).